We begin with the raw amino-acid sequence, 488 residues long: MVPVIALVGRPNVGKSTMFNRLTKTRDAIVGDLSGLTRDRQYGDASWQGRSYILIDTGGITGDEVGMDEKMAEQSLMAIEEADYVLFLVDARAGMTAADQMIAEHLRKRNKEAILVANKIDNIDADVARAEFSPLGMGNAIPVAGSQGRGINALMEAVLGHIPRDPVEDALDEDVAEGEEATRIPGPSEKDGIKIAIIGRPNVGKSTLVNRMLGEERVVVYDQPGTTRDSIYIPFERDGEKYTFIDTAGVRKRGKIHEEVEKFSVVKTLQAIKDANVVIFVMDAREGVVDHDLNLLGFALDAGRAVVIALNKWDGMEPGERDYVKTELERRLFFVDFADIHFISALHGTGVGHLYKSVQAAFMSAVTRWPTSRLTQILEDAISVHQPPLVNGRRIKLRYAHLGGANPPLIVIHGNQTDKIPNSYSRYLENTYRRVLKLVGTPIRIEYKGGDNPFEGKKNTLTDRQVNKKRRLMSHHKKAEKKRRDKRK.

EngA-type G domains lie at 3 to 166 (PVIA…PRDP) and 193 to 366 (IKIA…MSAV). GTP contacts are provided by residues 9–16 (GRPNVGKS), 56–60 (DTGGI), 118–121 (NKID), 199–206 (GRPNVGKS), 246–250 (DTAGV), and 311–314 (NKWD). The KH-like domain occupies 367 to 451 (TRWPTSRLTQ…PIRIEYKGGD (85 aa)). A compositionally biased stretch (basic and acidic residues) spans 449 to 461 (GGDNPFEGKKNTL). The interval 449–488 (GGDNPFEGKKNTLTDRQVNKKRRLMSHHKKAEKKRRDKRK) is disordered. Basic residues predominate over residues 467–488 (NKKRRLMSHHKKAEKKRRDKRK).

The protein belongs to the TRAFAC class TrmE-Era-EngA-EngB-Septin-like GTPase superfamily. EngA (Der) GTPase family. As to quaternary structure, associates with the 50S ribosomal subunit.

Its function is as follows. GTPase that plays an essential role in the late steps of ribosome biogenesis. This Pseudomonas entomophila (strain L48) protein is GTPase Der.